The following is a 164-amino-acid chain: Interleukin-10 (164 aa).

The N-terminal stretch at 1 to 18 (MPSSALLCCLIFLARVAA) is a signal peptide. 2 disulfide bridges follow: Cys-30/Cys-126 and Cys-80/Cys-132. A glycan (N-linked (GlcNAc...) asparagine) is linked at Asn-134.

Belongs to the IL-10 family. In terms of assembly, homodimer. Interacts with IL10RA and IL10RB.

It is found in the secreted. Its function is as follows. Major immune regulatory cytokine that acts on many cells of the immune system where it has profound anti-inflammatory functions, limiting excessive tissue disruption caused by inflammation. Mechanistically, IL10 binds to its heterotetrameric receptor comprising IL10RA and IL10RB leading to JAK1 and STAT2-mediated phosphorylation of STAT3. In turn, STAT3 translocates to the nucleus where it drives expression of anti-inflammatory mediators. Targets antigen-presenting cells (APCs) such as macrophages and monocytes and inhibits their release of pro-inflammatory cytokines including granulocyte-macrophage colony-stimulating factor /GM-CSF, granulocyte colony-stimulating factor/G-CSF, IL-1 alpha, IL-1 beta, IL-6, IL-8 and TNF-alpha. Also interferes with antigen presentation by reducing the expression of MHC-class II and co-stimulatory molecules, thereby inhibiting their ability to induce T cell activation. In addition, controls the inflammatory response of macrophages by reprogramming essential metabolic pathways including mTOR signaling. In Orcinus orca (Killer whale), this protein is Interleukin-10 (IL10).